The chain runs to 351 residues: Protein arginine N-methyltransferase 1 (351 aa).

An SAM-dependent MTase PRMT-type domain is found at 30–331 (KDYYFDSYAH…KNNRDLDFTV (302 aa)). S-adenosyl-L-methionine is bound by residues histidine 43, arginine 52, glycine 76, glutamate 98, and glutamate 127. Residues glutamate 142 and glutamate 151 contribute to the active site.

It belongs to the class I-like SAM-binding methyltransferase superfamily. Protein arginine N-methyltransferase family. As to quaternary structure, homodimer. Homooctamer; individual homodimers associates to form a homooctamer and homooligomerization is required for proper localization to the cell membrane. Individual homodimers can associate to form a homohexamer. Component of a complex with lsm14a/rap55a. Interacts with cirbp.

The protein localises to the nucleus. Its subcellular location is the nucleoplasm. It is found in the cytoplasm. It localises to the cytosol. It catalyses the reaction L-arginyl-[protein] + 2 S-adenosyl-L-methionine = N(omega),N(omega)-dimethyl-L-arginyl-[protein] + 2 S-adenosyl-L-homocysteine + 2 H(+). It carries out the reaction L-arginyl-[protein] + S-adenosyl-L-methionine = N(omega)-methyl-L-arginyl-[protein] + S-adenosyl-L-homocysteine + H(+). The catalysed reaction is N(omega)-methyl-L-arginyl-[protein] + S-adenosyl-L-methionine = N(omega),N(omega)-dimethyl-L-arginyl-[protein] + S-adenosyl-L-homocysteine + H(+). In terms of biological role, arginine methyltransferase that methylates (mono and asymmetric dimethylation) the guanidino nitrogens of arginyl residues present in target proteins. Constitutes the main enzyme that mediates monomethylation and asymmetric dimethylation of histone H4 'Arg-3' (H4R3me1 and H4R3me2a, respectively), a specific tag for epigenetic transcriptional activation. Methylates ilf3 to regulate its DNA-binding activity. Required for neural induction, playing a key role in the control of epidermal versus neural cell fate choice. Methylates cirbp to regulate its subcellular location. Acts transiently during metamorphosis as a transcription coactivator, enhancing thyroid hormone (T3) receptor (TR)-mediated transcription by enhancing TR binding to the T3 response element (TRE), and histone modification through recruitment of other coactivators. The protein is Protein arginine N-methyltransferase 1 of Xenopus tropicalis (Western clawed frog).